The sequence spans 118 residues: Mitochondrial import inner membrane translocase subunit Tim10 B (118 aa).

The Twin CX3C motif motif lies at 31-55 (CFQRCVPSLHHRALDAEEEACLHSC). Intrachain disulfides connect Cys31–Cys55 and Cys35–Cys51. Positions 89–118 (SAVPHATAEQLETSPSRSLPSGNLGKGGAG) are disordered. Residues 98–109 (QLETSPSRSLPS) show a composition bias toward polar residues.

The protein belongs to the small Tim family. Component of the TIM22 complex, which core is composed of TIMM22, associated with TIMM10 (TIMM10A and/or TIMM10B), TIMM9, AGK and TIMM29.

It is found in the mitochondrion inner membrane. Functionally, component of the TIM22 complex, a complex that mediates the import and insertion of multi-pass transmembrane proteins into the mitochondrial inner membrane. The TIM22 complex forms a twin-pore translocase that uses the membrane potential as the external driving force. In the TIM22 complex, it may act as a docking point for the soluble 70 kDa complex that guides the target proteins in transit through the aqueous mitochondrial intermembrane space. The sequence is that of Mitochondrial import inner membrane translocase subunit Tim10 B (TIMM10B) from Bos taurus (Bovine).